A 207-amino-acid chain; its full sequence is Phenazine biosynthesis protein PhzD1 (207 aa).

The Proton donor role is filled by aspartate 38. Residues glutamine 78, arginine 87, lysine 122, and 151–155 (YAHVG) contribute to the substrate site.

This sequence belongs to the isochorismatase family. In terms of assembly, homodimer.

It carries out the reaction (2S)-2-amino-4-deoxychorismate + H2O = (5S,6S)-6-amino-5-hydroxycyclohexa-1,3-diene-1-carboxyate + pyruvate. The protein operates within antibiotic biosynthesis; phenazine biosynthesis. Functionally, involved in the biosynthesis of the antibiotic phenazine, a nitrogen-containing heterocyclic molecule. PhzD1 (operon phzA1B1C1E1F1G1) has a role in the biosynthesis of the phenazine during planktonic growth. Catalyzes the hydrolysis of the vinyl ether functional group of 2-amino-2-deoxyisochorismate (ADIC), yielding pyruvate and trans-2,3-dihydro-3-hydroxyanthranilic acid (DHHA). Also able to act on isochorismate, chorismate and 4-amino-4-deoxychorismate (ADC) as substrates. In Pseudomonas aeruginosa (strain ATCC 15692 / DSM 22644 / CIP 104116 / JCM 14847 / LMG 12228 / 1C / PRS 101 / PAO1), this protein is Phenazine biosynthesis protein PhzD1.